The primary structure comprises 567 residues: Glutamine-dependent NAD(+) synthetase (567 aa).

A CN hydrolase domain is found at 2 to 242; it reads LNLTLAQLNF…EDILTVTLDL (241 aa). The active-site Proton acceptor; for glutaminase activity is E41. Residue K109 is the For glutaminase activity of the active site. Y115 lines the L-glutamine pocket. Residue C145 is the Nucleophile; for glutaminase activity of the active site. 2 residues coordinate L-glutamine: S172 and K178. The interval 287-567 is ligase; sequence PKEEEEIYAA…RMPVTNKFFK (281 aa). 316-323 contributes to the ATP binding site; it reads GLSGGIDS. Residue N399 participates in deamido-NAD(+) binding. T423 lines the ATP pocket. E428 and K538 together coordinate deamido-NAD(+).

This sequence in the C-terminal section; belongs to the NAD synthetase family.

It carries out the reaction deamido-NAD(+) + L-glutamine + ATP + H2O = L-glutamate + AMP + diphosphate + NAD(+) + H(+). Its pathway is cofactor biosynthesis; NAD(+) biosynthesis; NAD(+) from deamido-NAD(+) (L-Gln route): step 1/1. In terms of biological role, catalyzes the ATP-dependent amidation of deamido-NAD to form NAD. Uses L-glutamine as a nitrogen source. In Aquifex aeolicus (strain VF5), this protein is Glutamine-dependent NAD(+) synthetase.